We begin with the raw amino-acid sequence, 536 residues long: Prolyl 3-hydroxylase sudestada1 (536 aa).

A disordered region spans residues 1 to 35; sequence METSSSSPVKPRRKDKDEDGRAEQEDSADQVGEPH. The segment covering 14-24 has biased composition (basic and acidic residues); the sequence is KDKDEDGRAEQ. The Fe2OG dioxygenase domain maps to 165–275; sequence KLDYVSASCS…RLTINGWFHG (111 aa). Residues His185 and Asp187 each contribute to the Fe cation site. Tyr199 is a 2-oxoglutarate binding site. His254 serves as a coordination point for Fe cation. A 2-oxoglutarate-binding site is contributed by Arg266. The interval 467 to 486 is disordered; sequence PTAKAPTDGRRSDYDDEEED.

This sequence belongs to the TPA1 family. Monomer. Requires Fe(2+) as cofactor. The cofactor is L-ascorbate. As to expression, in third-instar larval tissues,highly expressed in the fat body, with significant expression in other organs including the brain, salivary glands, imaginal disks and gut.

It localises to the nucleus. It is found in the cytoplasm. The catalysed reaction is [ribosomal protein uS12]-L-proline + 2-oxoglutarate + O2 = [ribosomal protein uS12]-(3S)-3-hydroxy-L-proline + succinate + CO2. In terms of biological role, prolyl 3-hydroxylase that catalyzes 3-hydroxylation of 'Pro-62' of small ribosomal subunit uS12 (RpS23), thereby regulating protein translation termination efficiency. This Drosophila melanogaster (Fruit fly) protein is Prolyl 3-hydroxylase sudestada1 (sud1).